We begin with the raw amino-acid sequence, 744 residues long: MSAANPETPNSTISREASTQSSSAAASQGWVLPEGKIVPNTVFVGGIDARMDETEIGSCFGRYGSVKEVKIITNRTGVSKGYGFVSFVNDVDVQKIVGSQIHFHGKKLKLGPAIRKQKLCARHVQPRPLVVNPPPPPQFQNVWRNPNTETYLQPQITPNPVTQHVQSAANPETPNSTISREASTQSSSAAASQGWVLPEGKIVPNTVFVGGIDARMDETEIGSCFGRYGSVKEVKIITNRTGVSKGYGFVSFVNDVDVQKIVGSQIHFHGKKLKLGPAIRKQKLCARHVQPRPLVVNPPPPPQFQNVWRNPNTETYLQPQITPNPVTQHVQSAANPETPNSTISREASTQSSSAAASQGWVLPEGKIVPNTVFVGGIDARMDETEIGSCFGRYGSVKEVKIITNRTGVSKGYGFVSFVNDVDVQKIVGSQIHFHGKKLKLGPAIRKQKLCARHVQPRPLVVNPPPPPQFQNVWRNPNTETYLQPQITPNPVTQHVQAYSAYPHSPGQVITGCQLLVYNYQEYPTYPDSAFQVTTGYQLPVYNYQPFPAYPRSPFQVTAGYQLPVYNYQAFPAYPNSPFQVATGYQFPVYNYQPFPAYPSSPFQVTAGYQLPVYNYQAFPAYPNSPFQVATGYQFPVYNYQAFPAYPNSPVQVTTGYQLPVYNYQAFPAYPSSPFQVTTGYQLPVYNYQAFPAYPNSAVQVTTGYQFHVYNYQMPPQCPVGEQRRNLWTEAYKWWYLVCLIQRRD.

Positions 1–10 (MSAANPETPN) are enriched in polar residues. The tract at residues 1 to 27 (MSAANPETPNSTISREASTQSSSAAAS) is disordered. Over residues 11–27 (STISREASTQSSSAAAS) the composition is skewed to low complexity. An RRM 1 domain is found at 40 to 115 (NTVFVGGIDA…KKLKLGPAIR (76 aa)). Polar residues predominate over residues 163 to 175 (QHVQSAANPETPN). A disordered region spans residues 163–192 (QHVQSAANPETPNSTISREASTQSSSAAAS). The segment covering 176–192 (STISREASTQSSSAAAS) has biased composition (low complexity). In terms of domain architecture, RRM 2 spans 205-280 (NTVFVGGIDA…KKLKLGPAIR (76 aa)). A compositionally biased stretch (polar residues) spans 328–340 (QHVQSAANPETPN). Residues 328-357 (QHVQSAANPETPNSTISREASTQSSSAAAS) are disordered. The segment covering 341–357 (STISREASTQSSSAAAS) has biased composition (low complexity). In terms of domain architecture, RRM 3 spans 370–445 (NTVFVGGIDA…KKLKLGPAIR (76 aa)). DAZ domains are found at residues 497-520 (AYSA…YNYQ), 521-544 (EYPT…YNYQ), 545-568 (PFPA…YNYQ), 569-592 (AFPA…YNYQ), 593-616 (PFPA…YNYQ), 617-640 (AFPA…YNYQ), 641-664 (AFPA…YNYQ), 665-688 (AFPA…YNYQ), and 689-712 (AFPA…YNYQ).

This sequence belongs to the RRM DAZ family. In terms of assembly, forms a heterodimer with BOLL and DAZL. Interacts with PUM2, DAZAP1, DAZAP2, DZIP1 and DZIP3. Testis-specific. Expression restricted to premeiotic germ cells, particularly in spermatogonia (at protein level).

The protein resides in the cytoplasm. The protein localises to the nucleus. RNA-binding protein that plays an essential role in spermatogenesis. May act by binding to the 3'-UTR of mRNAs and regulating their translation. Promotes germ-cell progression to meiosis and formation of haploid germ cells. In Homo sapiens (Human), this protein is Deleted in azoospermia protein 1 (DAZ1).